The following is an 862-amino-acid chain: MFLNALKAVFGTKNDREVKKYFKRVAQINALEGNYQNLSDDELKAEFAKFKEQILSGEKNENDVLNDVFAIVRETGKRTLNMRHFDVQLIGGMVLHDGKIAEMKTGEGKTLVATLPVVLNAMSGKGVHVVTVNDYLAKRDAEQMSAIYNFLGFSVGVVLSSQNSDIEHKQAYDCDITYGTNNEFGFDYLRDNMKFSKAEKVQREHNFVIVDEVDSILIDEARTPLIISGPTNRTLDGYIKANEVAKQMQKGEAVLPPAKPEGDFVVDEKNRNILITEAGIAKAEKLFGVENLYSLDNAILAHQLDQALKAHNLFEKDVHYVLRNNEVIIVDEFTGRLSEGRRFSEGLHQALEAKENVKIQEESQTLADITFQNYFRMYNKLAGMTGTAQTEATEFSQIYSLDVISIPTNIPIKRQDKDDLIYKTQNEKFKAVIEEIKKANAKGQPVLVGTASIERSEVFHNMLVKEKIPHHVLNAKNHEQEALIIQDAGKKGAVTIATNMAGRGVDIKIDDEIRALGGLYIIGTERHESRRIDNQLRGRAGRQGDPGISRFYLSLEDNLLRIFGGDRIKSIMDRLGIEEGESIESRIVTRAVENAQKKVESLHFESRKHLLEYDDVANEQRKTIYRYRNELLDENYDIRAKISQNIAEYSANVMNDYMLDESGSNVNFENLKAKILYECSTQISEKDFENLSVIEMQDKLSQILENSYNEKMLRLEIKELRNIERILYLQVLDNAWREHLYQMDILKTGIGLRGYNQKDPLVEYKKESYNLFLELVNRIKFDSIKLLFSVQFNQEEAQNLENKANEENEKLLQSSVEMGASEDNLGEAEFKKVPRNAPCPCGSGKKFKECHGKSGPKQGILA.

ATP contacts are provided by residues Q88, 106 to 110 (GEGKT), and D506. The Zn(2+) site is built by C839, C841, C850, and H851.

It belongs to the SecA family. Monomer and homodimer. Part of the essential Sec protein translocation apparatus which comprises SecA, SecYEG and auxiliary proteins SecDF-YajC and YidC. Zn(2+) is required as a cofactor.

The protein localises to the cell inner membrane. The protein resides in the cytoplasm. The enzyme catalyses ATP + H2O + cellular proteinSide 1 = ADP + phosphate + cellular proteinSide 2.. In terms of biological role, part of the Sec protein translocase complex. Interacts with the SecYEG preprotein conducting channel. Has a central role in coupling the hydrolysis of ATP to the transfer of proteins into and across the cell membrane, serving as an ATP-driven molecular motor driving the stepwise translocation of polypeptide chains across the membrane. This chain is Protein translocase subunit SecA, found in Campylobacter jejuni subsp. jejuni serotype O:2 (strain ATCC 700819 / NCTC 11168).